Reading from the N-terminus, the 126-residue chain is Aspartate 1-decarboxylase (126 aa).

Catalysis depends on Ser-25, which acts as the Schiff-base intermediate with substrate; via pyruvic acid. At Ser-25 the chain carries Pyruvic acid (Ser). Residue Thr-57 participates in substrate binding. The active-site Proton donor is Tyr-58. Residue 73 to 75 coordinates substrate; the sequence is GAA.

This sequence belongs to the PanD family. Heterooctamer of four alpha and four beta subunits. Requires pyruvate as cofactor. Is synthesized initially as an inactive proenzyme, which is activated by self-cleavage at a specific serine bond to produce a beta-subunit with a hydroxyl group at its C-terminus and an alpha-subunit with a pyruvoyl group at its N-terminus.

It localises to the cytoplasm. It carries out the reaction L-aspartate + H(+) = beta-alanine + CO2. The protein operates within cofactor biosynthesis; (R)-pantothenate biosynthesis; beta-alanine from L-aspartate: step 1/1. In terms of biological role, catalyzes the pyruvoyl-dependent decarboxylation of aspartate to produce beta-alanine. This is Aspartate 1-decarboxylase from Thioalkalivibrio sulfidiphilus (strain HL-EbGR7).